A 392-amino-acid polypeptide reads, in one-letter code: 23S rRNA (uracil(747)-C(5))-methyltransferase RlmC (392 aa).

The [4Fe-4S] cluster site is built by Cys-4, Cys-12, Cys-15, and Cys-93. Positions 218, 247, 275, and 321 each coordinate S-adenosyl-L-methionine. The active-site Nucleophile is the Cys-348.

This sequence belongs to the class I-like SAM-binding methyltransferase superfamily. RNA M5U methyltransferase family. RlmC subfamily.

It catalyses the reaction uridine(747) in 23S rRNA + S-adenosyl-L-methionine = 5-methyluridine(747) in 23S rRNA + S-adenosyl-L-homocysteine + H(+). Catalyzes the formation of 5-methyl-uridine at position 747 (m5U747) in 23S rRNA. In Haemophilus influenzae (strain 86-028NP), this protein is 23S rRNA (uracil(747)-C(5))-methyltransferase RlmC.